Reading from the N-terminus, the 181-residue chain is Crossover junction endodeoxyribonuclease RuvC (181 aa).

Catalysis depends on residues Asp-7, Glu-67, and Asp-139. Residues Asp-7, Glu-67, and Asp-139 each contribute to the Mg(2+) site.

Belongs to the RuvC family. As to quaternary structure, homodimer which binds Holliday junction (HJ) DNA. The HJ becomes 2-fold symmetrical on binding to RuvC with unstacked arms; it has a different conformation from HJ DNA in complex with RuvA. In the full resolvosome a probable DNA-RuvA(4)-RuvB(12)-RuvC(2) complex forms which resolves the HJ. Mg(2+) serves as cofactor.

It localises to the cytoplasm. It carries out the reaction Endonucleolytic cleavage at a junction such as a reciprocal single-stranded crossover between two homologous DNA duplexes (Holliday junction).. The RuvA-RuvB-RuvC complex processes Holliday junction (HJ) DNA during genetic recombination and DNA repair. Endonuclease that resolves HJ intermediates. Cleaves cruciform DNA by making single-stranded nicks across the HJ at symmetrical positions within the homologous arms, yielding a 5'-phosphate and a 3'-hydroxyl group; requires a central core of homology in the junction. The consensus cleavage sequence is 5'-(A/T)TT(C/G)-3'. Cleavage occurs on the 3'-side of the TT dinucleotide at the point of strand exchange. HJ branch migration catalyzed by RuvA-RuvB allows RuvC to scan DNA until it finds its consensus sequence, where it cleaves and resolves the cruciform DNA. This is Crossover junction endodeoxyribonuclease RuvC from Cupriavidus taiwanensis (strain DSM 17343 / BCRC 17206 / CCUG 44338 / CIP 107171 / LMG 19424 / R1) (Ralstonia taiwanensis (strain LMG 19424)).